Consider the following 129-residue polypeptide: Ribosome-binding factor A (129 aa).

The protein belongs to the RbfA family. As to quaternary structure, monomer. Binds 30S ribosomal subunits, but not 50S ribosomal subunits or 70S ribosomes.

Its subcellular location is the cytoplasm. In terms of biological role, one of several proteins that assist in the late maturation steps of the functional core of the 30S ribosomal subunit. Associates with free 30S ribosomal subunits (but not with 30S subunits that are part of 70S ribosomes or polysomes). Required for efficient processing of 16S rRNA. May interact with the 5'-terminal helix region of 16S rRNA. This is Ribosome-binding factor A from Ectopseudomonas mendocina (strain ymp) (Pseudomonas mendocina).